We begin with the raw amino-acid sequence, 200 residues long: VIGGDECNINEHPFLVALHTARXXRFYCAGTLINQEWVLTAARCDRXXXXXILGVHSKXXXXXXXXXXXXXXXXXXXXXXTYTRWDKDIMLIRLKRXXXXXXXXXXXXXXXXXXXXXXXXXIMGWGTITTTKVTYPDVPHCADINMFDYSVCQKXXXKLPEKSRTLCAGILQGGIDSCKGISGGPLICNGEIQGIVSYGK.

A Peptidase S1 domain is found at 1–200; it reads VIGGDECNIN…EIQGIVSYGK (200 aa). Catalysis depends on charge relay system residues Asp88 and Ser182.

Monomer. Post-translationally, N-glycosylated. The protein exist in multiple isoforms. In terms of tissue distribution, expressed by the venom gland.

It is found in the secreted. Its activity is regulated as follows. Inhibited by Pefabloc (90% inhibition), DTT (90%), Zn(2+) (80%), trypsin inhibitor II (50%), and benzamidine (45%), but not inhibited by EDTA, Ca(2+), Mg(2+) and L-Cys. Functionally, snake venom serine protease active on several blood coagulation enzymes. It completely cleaves fibrinogen Aalpha chain (FGA) after 120 minutes, partially cleaves Bbeta chain (FGB) (overnight) and has no activity on gamma chain. It does not release fibrinopeptides A and/or B exclusively, since the enzyme does not provoke fibrin polymerisation. It also degrades fibrin as efficiently as plasmin, and exhibits potent ability to cleave plasminogen and prothrombin, as well as heavy chain of factor X (F10). In vitro, it cleaves insulin B-chain (at positions His38-Leu39, Ala40-Leu41 and Tyr16-Leu17). In Vipera ammodytes ammodytes (Western sand viper), this protein is Snake venom serine protease VaSP1.